We begin with the raw amino-acid sequence, 331 residues long: MALPDFTMRQLLEAGVHFGHQSHRWNPKMAPFIFGTRNNIHIVDLAQTVPMLHHALQAVSDTVAKGGRILFVGTKRQAQDGVADAAKRCAQYFVNSRWLGGTLTNWKTISASIKRLRHLDDVLAGGEANSYTKKERLTLQRERDKLDRSLGGIKDMGGLPDLIFVIDTNKEDIAIQEAQRLNIPVAAIVDTNSDPKGITYVVPGNDDAGRAISLYCDLIARAAIDGISRAQGDSGIDIGASARPLAEELPAASSSGFQGLAGPRGTADDLKKLPGVSGAIEKKFNDLGIFHFWQLAELDHDTAHTIGEEVGLPSRADAWVAKAKALTAEAE.

It belongs to the universal ribosomal protein uS2 family.

The chain is Small ribosomal subunit protein uS2 from Bradyrhizobium diazoefficiens (strain JCM 10833 / BCRC 13528 / IAM 13628 / NBRC 14792 / USDA 110).